Consider the following 341-residue polypeptide: Heme A synthase (341 aa).

A run of 8 helical transmembrane segments spans residues 8–28, 92–112, 126–146, 160–180, 201–221, 256–276, 294–314, and 315–335; these read VIIW…VGGI, FHRF…VYFL, IVLL…VRSG, LHLT…LDLI, AALL…AGLI, VQFV…FLFF, LVVF…YSVP, and LALG…MTYT. Histidine 260 contributes to the heme binding site. Histidine 321 lines the heme pocket.

The protein belongs to the COX15/CtaA family. Type 2 subfamily. Interacts with CtaB. Heme b serves as cofactor.

The protein localises to the cell membrane. The catalysed reaction is Fe(II)-heme o + 2 A + H2O = Fe(II)-heme a + 2 AH2. Its pathway is porphyrin-containing compound metabolism; heme A biosynthesis; heme A from heme O: step 1/1. Functionally, catalyzes the conversion of heme O to heme A by two successive hydroxylations of the methyl group at C8. The first hydroxylation forms heme I, the second hydroxylation results in an unstable dihydroxymethyl group, which spontaneously dehydrates, resulting in the formyl group of heme A. This chain is Heme A synthase, found in Flavobacterium johnsoniae (strain ATCC 17061 / DSM 2064 / JCM 8514 / BCRC 14874 / CCUG 350202 / NBRC 14942 / NCIMB 11054 / UW101) (Cytophaga johnsonae).